Consider the following 237-residue polypeptide: Opacity protein opA57 (237 aa).

Residue alanine 1 is a signal peptide.

Belongs to the opacity porin family.

It is found in the cell outer membrane. Functionally, implicated in a number of adherence functions. OPA proteins are implicated in pathogenesis and are subject to phase variation. This is Opacity protein opA57 (opaK) from Neisseria gonorrhoeae.